The following is a 253-amino-acid chain: FGFR1 oncogene partner 2 (253 aa).

Residues 5–104 (IEKALADAKA…SALELIMSKY (100 aa)) adopt a coiled-coil conformation. A Phosphoserine modification is found at S141. Residues 160-223 (LERRHLEANQ…LREILQITRE (64 aa)) are a coiled coil. Residues 231–253 (DDASESTSLSALVTNSDLSLRKS) form a disordered region. Residues 235–253 (ESTSLSALVTNSDLSLRKS) are compositionally biased toward polar residues.

Belongs to the SIKE family. Expressed in bone marrow, spleen and thymus.

The protein localises to the cytoplasm. In terms of biological role, may be involved in wound healing pathway. This Homo sapiens (Human) protein is FGFR1 oncogene partner 2 (FGFR1OP2).